The following is a 101-amino-acid chain: Integration host factor subunit beta (101 aa).

The segment at 57–76 (PARAGRNPRTGEHVPVDQKS) is disordered.

The protein belongs to the bacterial histone-like protein family. As to quaternary structure, heterodimer of an alpha and a beta chain.

Functionally, this protein is one of the two subunits of integration host factor, a specific DNA-binding protein that functions in genetic recombination as well as in transcriptional and translational control. The chain is Integration host factor subunit beta from Nitrobacter winogradskyi (strain ATCC 25391 / DSM 10237 / CIP 104748 / NCIMB 11846 / Nb-255).